The chain runs to 626 residues: 4-hydroxy-3-methylbut-2-en-1-yl diphosphate synthase (flavodoxin) (626 aa).

[4Fe-4S] cluster contacts are provided by Cys521, Cys524, Cys555, and Glu562.

It belongs to the IspG family. [4Fe-4S] cluster is required as a cofactor.

The enzyme catalyses (2E)-4-hydroxy-3-methylbut-2-enyl diphosphate + oxidized [flavodoxin] + H2O + 2 H(+) = 2-C-methyl-D-erythritol 2,4-cyclic diphosphate + reduced [flavodoxin]. Its pathway is isoprenoid biosynthesis; isopentenyl diphosphate biosynthesis via DXP pathway; isopentenyl diphosphate from 1-deoxy-D-xylulose 5-phosphate: step 5/6. Converts 2C-methyl-D-erythritol 2,4-cyclodiphosphate (ME-2,4cPP) into 1-hydroxy-2-methyl-2-(E)-butenyl 4-diphosphate. The polypeptide is 4-hydroxy-3-methylbut-2-en-1-yl diphosphate synthase (flavodoxin) (Bacteroides fragilis (strain ATCC 25285 / DSM 2151 / CCUG 4856 / JCM 11019 / LMG 10263 / NCTC 9343 / Onslow / VPI 2553 / EN-2)).